Consider the following 345-residue polypeptide: Thylakoid lumenal 29 kDa protein, chloroplastic (345 aa).

The protein belongs to the peroxidase family.

The protein resides in the plastid. The protein localises to the chloroplast thylakoid lumen. The protein is Thylakoid lumenal 29 kDa protein, chloroplastic (CLEB3J9) of Solanum lycopersicum (Tomato).